The primary structure comprises 593 residues: ESX-1 secretion system protein EccCb1 (593 aa).

FtsK domains follow at residues 66–260 (RQEV…NETQ) and 350–546 (QVPL…EKND). Residues 85–92 (GAPQTGKS) and 377–384 (GAPKSGKT) contribute to the ATP site.

As to quaternary structure, part of the ESX-1 / type VII secretion system (T7SS), which is composed of cytosolic and membrane components. The ESX-1 membrane complex is composed of EccB1, EccCa1, EccCb1, EccD1 and EccE1.

The protein localises to the cytoplasm. Its function is as follows. Part of the ESX-1 / type VII specialized secretion system (T7SS), which exports several proteins including EsxA and EsxB. Plays a role in DNA conjugation, in both donor and recipient strains. The sequence is that of ESX-1 secretion system protein EccCb1 from Mycolicibacterium smegmatis (strain ATCC 700084 / mc(2)155) (Mycobacterium smegmatis).